The chain runs to 446 residues: Ribosome biogenesis protein WDR12 homolog (446 aa).

The ubiquitin-like (UBL) domain stretch occupies residues 21 to 105 (VQITFFSKDK…ETILKIECII (85 aa)). WD repeat units follow at residues 171–211 (KCSG…LVEK) and 216–255 (GHER…EATI). A disordered region spans residues 256-275 (YEKEEEESSAKKKRKKDTRT). WD repeat units follow at residues 284–324 (GHRD…EVSR), 326–365 (KGPK…GAMV), 371–412 (GHQN…SSLF), and 416–446 (GHED…FETS).

The protein belongs to the WD repeat WDR12/YTM1 family.

It localises to the nucleus. Its subcellular location is the nucleolus. The protein localises to the nucleoplasm. Required for maturation of ribosomal RNAs and formation of the large ribosomal subunit. In Caenorhabditis briggsae, this protein is Ribosome biogenesis protein WDR12 homolog.